Reading from the N-terminus, the 271-residue chain is Insulin-like growth factor-binding protein 5 (271 aa).

The signal sequence occupies residues 1–19; sequence MVISVVLLLLAACAVPAQG. The 81-residue stretch at 22 to 102 folds into the IGFBP N-terminal domain; sequence SFVHCEPCDE…LHGRGVCLNE (81 aa). 6 disulfide bridges follow: Cys26-Cys52, Cys29-Cys54, Cys37-Cys55, Cys44-Cys58, Cys66-Cys79, and Cys73-Cys99. The span at 109 to 121 shows a compositional bias: basic and acidic residues; the sequence is TKIERDSREHEEP. Residues 109–129 form a disordered region; the sequence is TKIERDSREHEEPTTSEMAEE. A Phosphoserine modification is found at Ser115. In terms of domain architecture, Thyroglobulin type-1 spans 188-262; it reads QGPCRRHMEA…MEYVDGDFQC (75 aa). 3 cysteine pairs are disulfide-bonded: Cys191–Cys218, Cys229–Cys240, and Cys242–Cys262.

Interacts with IGF1; this interaction enhances the growth stimulatory effects of IGF1 on fibroblasts. Interacts with CAV1; this interaction allows trafficking of IGFBP5 from the plasma membrane to the nucleus. Interacts with NCL; this interaction is necessary for IGFBP5 localization to the nucleus. As to expression, mostly in kidney.

It localises to the secreted. Its subcellular location is the cytoplasm. It is found in the nucleus. Functionally, multifunctional protein that plays a critical role in regulating the availability of IGFs to their receptors and thereby regulates IGF-mediated cellular processes including proliferation, differentiation, and apoptosis in a cell-type specific manner. Increases the cell proliferation of osteoblasts, intestinal smooth muscle cells and neuroblastoma cells. Enhances adhesion and survival of epithelial cells but decreases adhesion of mesenchymal cells. Once secreted, acts as a major mediator of mTORC1-dependent feedback inhibition of IGF1 signaling. Also plays a role in the induction of extracellular matrix (ECM) production and deposition independently of its nuclear translocation and binding to IGFs. Acts itself as a growth factor that can act independently of IGFs to regulate bone formation. Acts as a ligand for the ROR1 receptor which triggers formation of ROR1/HER2 heterodimer to enhance CREB oncogenic signaling. In Rattus norvegicus (Rat), this protein is Insulin-like growth factor-binding protein 5 (Igfbp5).